The primary structure comprises 392 residues: Cytochrome b (392 aa).

The next 4 membrane-spanning stretches (helical) occupy residues 38–58 (FGSL…FLAM), 82–104 (WLLR…LHIF), 119–139 (VRCL…TGYV), and 185–205 (FFSL…LHLA). His-88 and His-102 together coordinate heme b. 2 residues coordinate heme b: His-189 and His-203. An a ubiquinone-binding site is contributed by His-208. Transmembrane regions (helical) follow at residues 231 to 251 (FYVK…IWIF), 295 to 315 (SGGV…PFFK), 327 to 347 (IHQG…WIGC), and 354 to 373 (FVTI…AITP).

It belongs to the cytochrome b family. In terms of assembly, the main subunits of complex b-c1 are: cytochrome b, cytochrome c1 and the Rieske protein. The cofactor is heme b.

It localises to the mitochondrion inner membrane. Its function is as follows. Component of the ubiquinol-cytochrome c reductase complex (complex III or cytochrome b-c1 complex) that is part of the mitochondrial respiratory chain. The b-c1 complex mediates electron transfer from ubiquinol to cytochrome c. Contributes to the generation of a proton gradient across the mitochondrial membrane that is then used for ATP synthesis. This is Cytochrome b (MT-CYB) from Vicia faba (Broad bean).